Consider the following 442-residue polypeptide: Alpha-1,6-mannosyl-glycoprotein 2-beta-N-acetylglucosaminyltransferase (442 aa).

At 1-9 the chain is on the cytoplasmic side; the sequence is MRFRIYKRK. The chain crosses the membrane as a helical; Signal-anchor for type II membrane protein span at residues 10–29; that stretch reads VLILTLVVAACGFVLWSSNG. The Lumenal segment spans residues 30-442; sequence RQRKNDALAP…ELCKSYRRLQ (413 aa). Residues asparagine 64 and asparagine 81 are each glycosylated (N-linked (GlcNAc...) asparagine). Substrate-binding positions include 118–122 and aspartate 149; that span reads QVHNR. Cysteines 191 and 205 form a disulfide. 224–228 contributes to the substrate binding site; the sequence is QTKHH. Aspartate 256 is a Mn(2+) binding site. Cysteine 278 and cysteine 281 are joined by a disulfide. Arginine 293 contacts substrate. Cystine bridges form between cysteine 329-cysteine 352, cysteine 334-cysteine 435, and cysteine 373-cysteine 381. Histidine 369 is a Mn(2+) binding site.

It belongs to the glycosyltransferase 16 (GT16) protein family. Homodimer. Mn(2+) serves as cofactor. Detected in liver (at protein level). Detected in liver, brain, thymus and spleen.

The protein localises to the golgi apparatus membrane. The enzyme catalyses an N(4)-{beta-D-GlcNAc-(1-&gt;2)-alpha-D-Man-(1-&gt;3)-[alpha-D-Man-(1-&gt;6)]-beta-D-Man-(1-&gt;4)-beta-D-GlcNAc-(1-&gt;4)-beta-D-GlcNAc}-L-asparaginyl-[protein] + UDP-N-acetyl-alpha-D-glucosamine = N(4)-{beta-D-GlcNAc-(1-&gt;2)-alpha-D-Man-(1-&gt;3)-[beta-D-GlcNAc-(1-&gt;2)-alpha-D-Man-(1-&gt;6)]-beta-D-Man-(1-&gt;4)-beta-D-GlcNAc-(1-&gt;4)-beta-D-GlcNAc}-L-asparaginyl-[protein] + UDP + H(+). It participates in protein modification; protein glycosylation. Functionally, plays an essential role in protein N-glycosylation. Catalyzes the transfer of N-acetylglucosamine (GlcNAc) onto the free terminal mannose moiety in the core structure of the nascent N-linked glycan chain, giving rise to the second branch in complex glycans. In Rattus norvegicus (Rat), this protein is Alpha-1,6-mannosyl-glycoprotein 2-beta-N-acetylglucosaminyltransferase (Mgat2).